Reading from the N-terminus, the 236-residue chain is 2,3,4,5-tetrahydropyridine-2,6-dicarboxylate N-acetyltransferase (236 aa).

This sequence belongs to the transferase hexapeptide repeat family. DapH subfamily.

The enzyme catalyses (S)-2,3,4,5-tetrahydrodipicolinate + acetyl-CoA + H2O = L-2-acetamido-6-oxoheptanedioate + CoA. The protein operates within amino-acid biosynthesis; L-lysine biosynthesis via DAP pathway; LL-2,6-diaminopimelate from (S)-tetrahydrodipicolinate (acetylase route): step 1/3. Catalyzes the transfer of an acetyl group from acetyl-CoA to tetrahydrodipicolinate. This Listeria ivanovii protein is 2,3,4,5-tetrahydropyridine-2,6-dicarboxylate N-acetyltransferase.